We begin with the raw amino-acid sequence, 506 residues long: Probable cytosol aminopeptidase (506 aa).

K278 and D283 together coordinate Mn(2+). K290 is an active-site residue. Residues D301, D360, and E362 each contribute to the Mn(2+) site. Residue R364 is part of the active site.

It belongs to the peptidase M17 family. It depends on Mn(2+) as a cofactor.

It is found in the cytoplasm. The enzyme catalyses Release of an N-terminal amino acid, Xaa-|-Yaa-, in which Xaa is preferably Leu, but may be other amino acids including Pro although not Arg or Lys, and Yaa may be Pro. Amino acid amides and methyl esters are also readily hydrolyzed, but rates on arylamides are exceedingly low.. The catalysed reaction is Release of an N-terminal amino acid, preferentially leucine, but not glutamic or aspartic acids.. Its function is as follows. Presumably involved in the processing and regular turnover of intracellular proteins. Catalyzes the removal of unsubstituted N-terminal amino acids from various peptides. In Ralstonia nicotianae (strain ATCC BAA-1114 / GMI1000) (Ralstonia solanacearum), this protein is Probable cytosol aminopeptidase.